The chain runs to 229 residues: 2,3-bisphosphoglycerate-dependent phosphoglycerate mutase 2 (229 aa).

Substrate-binding positions include 8–15 (RHGQSEWN), 21–22 (TG), Arg60, 87–90 (ERHY), Lys98, 114–115 (RR), and 183–184 (GN). His9 serves as the catalytic Tele-phosphohistidine intermediate. The active-site Proton donor/acceptor is Glu87.

This sequence belongs to the phosphoglycerate mutase family. BPG-dependent PGAM subfamily.

It catalyses the reaction (2R)-2-phosphoglycerate = (2R)-3-phosphoglycerate. It functions in the pathway carbohydrate degradation; glycolysis; pyruvate from D-glyceraldehyde 3-phosphate: step 3/5. Functionally, catalyzes the interconversion of 2-phosphoglycerate and 3-phosphoglycerate. The protein is 2,3-bisphosphoglycerate-dependent phosphoglycerate mutase 2 of Latilactobacillus sakei subsp. sakei (strain 23K) (Lactobacillus sakei subsp. sakei).